The primary structure comprises 498 residues: ATP synthase subunit beta, chloroplastic (498 aa).

Gly-172–Thr-179 lines the ATP pocket.

It belongs to the ATPase alpha/beta chains family. In terms of assembly, F-type ATPases have 2 components, CF(1) - the catalytic core - and CF(0) - the membrane proton channel. CF(1) has five subunits: alpha(3), beta(3), gamma(1), delta(1), epsilon(1). CF(0) has four main subunits: a(1), b(1), b'(1) and c(9-12).

It localises to the plastid. The protein resides in the chloroplast thylakoid membrane. The enzyme catalyses ATP + H2O + 4 H(+)(in) = ADP + phosphate + 5 H(+)(out). In terms of biological role, produces ATP from ADP in the presence of a proton gradient across the membrane. The catalytic sites are hosted primarily by the beta subunits. In Vitis vinifera (Grape), this protein is ATP synthase subunit beta, chloroplastic.